A 610-amino-acid chain; its full sequence is Elongation factor 4 (610 aa).

The 183-residue stretch at 11–193 (EKIRNFSIIA…QIVEKVPAPT (183 aa)) folds into the tr-type G domain. Residues 23–28 (DHGKST) and 140–143 (NKID) each bind GTP.

Belongs to the TRAFAC class translation factor GTPase superfamily. Classic translation factor GTPase family. LepA subfamily.

The protein resides in the cell membrane. It carries out the reaction GTP + H2O = GDP + phosphate + H(+). Required for accurate and efficient protein synthesis under certain stress conditions. May act as a fidelity factor of the translation reaction, by catalyzing a one-codon backward translocation of tRNAs on improperly translocated ribosomes. Back-translocation proceeds from a post-translocation (POST) complex to a pre-translocation (PRE) complex, thus giving elongation factor G a second chance to translocate the tRNAs correctly. Binds to ribosomes in a GTP-dependent manner. The protein is Elongation factor 4 of Streptococcus pyogenes serotype M12 (strain MGAS9429).